The chain runs to 137 residues: Small ribosomal subunit protein uS9 (137 aa).

The segment covering 105-117 (LKVEGYLTRDPRA) has biased composition (basic and acidic residues). Residues 105–137 (LKVEGYLTRDPRAKERKKYGLRKARKAPQYSKR) form a disordered region. Residues 118-137 (KERKKYGLRKARKAPQYSKR) show a composition bias toward basic residues.

It belongs to the universal ribosomal protein uS9 family.

In Cyanothece sp. (strain PCC 7425 / ATCC 29141), this protein is Small ribosomal subunit protein uS9.